A 60-amino-acid polypeptide reads, in one-letter code: Large ribosomal subunit protein bL32 (60 aa).

Belongs to the bacterial ribosomal protein bL32 family.

This chain is Large ribosomal subunit protein bL32, found in Streptococcus sanguinis (strain SK36).